The sequence spans 80 residues: Small ribosomal subunit protein bS18c (80 aa).

Positions 1-19 are enriched in basic residues; it reads MKKFISRPKRSSRRRKKTP. Residues 1–24 form a disordered region; the sequence is MKKFISRPKRSSRRRKKTPIKPGE.

This sequence belongs to the bacterial ribosomal protein bS18 family. Part of the 30S ribosomal subunit.

It is found in the plastid. The protein resides in the chloroplast. In Staurastrum punctulatum (Green alga), this protein is Small ribosomal subunit protein bS18c.